A 482-amino-acid chain; its full sequence is MAAPEKMTFPEKPSHKKYRAALKKEKRKKRRQELARLRDSGLSQKEEEEDTFIEEQQLEEEKLLERERQRLHEEWLLREQKAQEEFRIKKEKEEAAKKRQEEQERKLKEQWEEQQRKEREEEEQKRQEKKEKEEALQKMLDQAENELENGTTWQNPEPPVDFRVMEKDRANCPFYSKTGACRFGDRCSRKHNFPTSSPTLLIKSMFTTFGMEQCRRDDYDPDASLEYSEEETYQQFLDFYEDVLPEFKNVGKVIQFKVSCNLEPHLRGNVYVQYQSEEECQAALSLFNGRWYAGRQLQCEFCPVTRWKMAICGLFEIQQCPRGKHCNFLHVFRNPNNEFWEANRDIYLSPDRTGSSFGKNSERRERMGHHDDYYSRLRGRRNPSPDHSYKRNGESERKSSRHRGKKSHKRTSKSRERHNSRSRGRNRDRSRDRSRGRGSRSRSRSRSRRSRRSRSQSSSRSRSRGRRRSGNRDRTVQSPKSK.

The segment at 1–59 (MAAPEKMTFPEKPSHKKYRAALKKEKRKKRRQELARLRDSGLSQKEEEEDTFIEEQQLE) is disordered. Over residues 14–31 (SHKKYRAALKKEKRKKRR) the composition is skewed to basic residues. Lysine 45 is covalently cross-linked (Glycyl lysine isopeptide (Lys-Gly) (interchain with G-Cter in SUMO2)). Over residues 46–58 (EEEEDTFIEEQQL) the composition is skewed to acidic residues. A Glycyl lysine isopeptide (Lys-Gly) (interchain with G-Cter in SUMO2) cross-link involves residue lysine 62. Residues 115–135 (QRKEREEEEQKRQEKKEKEEA) form a disordered region. A C3H1-type 1 zinc finger spans residues 166 to 194 (EKDRANCPFYSKTGACRFGDRCSRKHNFP). An RRM domain is found at 198–304 (PTLLIKSMFT…RQLQCEFCPV (107 aa)). The segment at 306–333 (RWKMAICGLFEIQQCPRGKHCNFLHVFR) adopts a C3H1-type 2 zinc-finger fold. Phosphoserine is present on serine 349. The segment at 351-482 (DRTGSSFGKN…DRTVQSPKSK (132 aa)) is disordered. Basic and acidic residues-rich tracts occupy residues 360 to 375 (NSERRERMGHHDDYYS) and 383 to 398 (PSPDHSYKRNGESERK). Position 384 is a phosphoserine (serine 384). Over residues 399 to 412 (SSRHRGKKSHKRTS) the composition is skewed to basic residues. The span at 413–435 (KSRERHNSRSRGRNRDRSRDRSR) shows a compositional bias: basic and acidic residues. Positions 436-454 (GRGSRSRSRSRSRRSRRSR) are enriched in basic residues.

Component of the U11/U12 snRNPs that are part of the U12-type spliceosome. Interacts (via RS domain) with SRSF1 and SRSF2. Interacts with U2AF2/U2AF65. Phosphorylated in the RS domain by SRPK1. Widely expressed.

The protein resides in the nucleus. Pre-mRNA-binding protein required for splicing of both U2- and U12-type introns. Selectively interacts with the 3'-splice site of U2- and U12-type pre-mRNAs and promotes different steps in U2 and U12 intron splicing. Recruited to U12 pre-mRNAs in an ATP-dependent manner and is required for assembly of the pre-spliceosome, a precursor to other spliceosomal complexes. For U2-type introns, it is selectively and specifically required for the second step of splicing. The polypeptide is U2 small nuclear ribonucleoprotein auxiliary factor 35 kDa subunit-related protein 2 (ZRSR2) (Homo sapiens (Human)).